A 301-amino-acid polypeptide reads, in one-letter code: uncharacterized protein (301 aa).

This sequence belongs to the asfivirus E301R family. In terms of assembly, interacts with host IRF3.

In terms of biological role, plays a role in the inhibition of host innate immune system by acting as a negatively regulator of type I interferon production. Mechanistically, interacts with and prevents host IRF3 nuclear localization to inhibit its transcriptional activity. This is an uncharacterized protein from African swine fever virus (isolate Warthog/Namibia/Wart80/1980) (ASFV).